The sequence spans 254 residues: Imidazole glycerol phosphate synthase subunit HisF (254 aa).

Catalysis depends on residues aspartate 11 and aspartate 130.

The protein belongs to the HisA/HisF family. Heterodimer of HisH and HisF.

It is found in the cytoplasm. The catalysed reaction is 5-[(5-phospho-1-deoxy-D-ribulos-1-ylimino)methylamino]-1-(5-phospho-beta-D-ribosyl)imidazole-4-carboxamide + L-glutamine = D-erythro-1-(imidazol-4-yl)glycerol 3-phosphate + 5-amino-1-(5-phospho-beta-D-ribosyl)imidazole-4-carboxamide + L-glutamate + H(+). It participates in amino-acid biosynthesis; L-histidine biosynthesis; L-histidine from 5-phospho-alpha-D-ribose 1-diphosphate: step 5/9. In terms of biological role, IGPS catalyzes the conversion of PRFAR and glutamine to IGP, AICAR and glutamate. The HisF subunit catalyzes the cyclization activity that produces IGP and AICAR from PRFAR using the ammonia provided by the HisH subunit. This chain is Imidazole glycerol phosphate synthase subunit HisF, found in Acidiphilium cryptum (strain JF-5).